A 753-amino-acid chain; its full sequence is Inactive protein-tyrosine phosphatase egg-4 (753 aa).

Disordered stretches follow at residues Thr26 to Asn46 and Ser75 to Gly145. Over residues Asn35 to Asn46 the composition is skewed to low complexity. Composition is skewed to basic and acidic residues over residues Ala84–Leu94 and Val129–Gly145. In terms of domain architecture, Tyrosine-protein phosphatase spans Met408–Phe661.

The protein belongs to the protein-tyrosine phosphatase family. As to quaternary structure, part of a complex, consisting of pseudophosphatases egg-3, egg-4, egg-5 and kinase mbk-2; this complex is required for the oocyte-to-zygote transition. Interacts (via tyrosine-protein phosphatase domain) with kinase mbk-2 (via 'Tyr-619' and 'Tyr-621'); mbk-2 tyrosine phosphorylation enhances the interaction. The interaction inhibits mbk-2 kinase activity and is required for mbk-2 oocyte cortex localization. Interacts with egg-3.

Its subcellular location is the cytoplasm. It is found in the cell cortex. Its function is as follows. Inactive phosphatase which acts redundantly with egg-5 in the oocyte-to-zygote transition. Required for the polarization of cortical actin cytoskeleton rearrangement in the oocyte before and after fertilization. Together with egg-5, required for the cortical localization of kinase mbk-2 and for the inhibition of mbk-2 kinase activity in maturing oocyte until the end of meiosis I. Also required for kinase mbk-2, pseudophosphatase egg-3 and chitin synthase chs-1 localization to cytoplasmic foci after fertilization. The polypeptide is Inactive protein-tyrosine phosphatase egg-4 (Caenorhabditis elegans).